A 212-amino-acid polypeptide reads, in one-letter code: Peptide methionine sulfoxide reductase MsrA (212 aa).

C52 is a catalytic residue.

The protein belongs to the MsrA Met sulfoxide reductase family.

The catalysed reaction is L-methionyl-[protein] + [thioredoxin]-disulfide + H2O = L-methionyl-(S)-S-oxide-[protein] + [thioredoxin]-dithiol. It catalyses the reaction [thioredoxin]-disulfide + L-methionine + H2O = L-methionine (S)-S-oxide + [thioredoxin]-dithiol. Has an important function as a repair enzyme for proteins that have been inactivated by oxidation. Catalyzes the reversible oxidation-reduction of methionine sulfoxide in proteins to methionine. This Salmonella schwarzengrund (strain CVM19633) protein is Peptide methionine sulfoxide reductase MsrA.